Here is a 101-residue protein sequence, read N- to C-terminus: Large ribosomal subunit protein uL24 (101 aa).

This sequence belongs to the universal ribosomal protein uL24 family. In terms of assembly, part of the 50S ribosomal subunit.

One of two assembly initiator proteins, it binds directly to the 5'-end of the 23S rRNA, where it nucleates assembly of the 50S subunit. Its function is as follows. One of the proteins that surrounds the polypeptide exit tunnel on the outside of the subunit. The protein is Large ribosomal subunit protein uL24 of Streptococcus mutans serotype c (strain ATCC 700610 / UA159).